The chain runs to 436 residues: MTTATAAPEIRKAGFFTEHLETADAEVFAAIRGELKRQQTKIELIASENITSLAVLEATGSVFTNKYAEGYPGKRYYGGCEYADVVENLAIERAKKLFGCNFANVQPNSGSQMNQAVFLALLQPGDSFMGLDLNSGGHLTHGSPVNMSGKWFKPIPYGVRADDHLIDMDEVARLARENKPKLIIAGGTAYSRVWDFKRFREIADEVGAWLLVDMSHFSGLVAGGAHPSPFPHAHVVTSTTHKSLRGPRSGIILTNDEDLAKKFNMAVFPGMQGGPLVHVIAAKAVAFGEALRPEFKAYAAQIVANARALAEAVKDAGLSVVSGGTDNHLMLVDLSAKDVTGKAAEKGLDRAWLTCNKNGVPFDKRSPFVTSGIRLGTPAGTTRGFREEEFRKIGALIGEVVDGLARNGEEGDGQVEQRVRDRVAELCAQFPIYPEL.

(6S)-5,6,7,8-tetrahydrofolate contacts are provided by residues Leu133 and 137–139 (GHL). At Lys242 the chain carries N6-(pyridoxal phosphate)lysine. 366-368 (SPF) contributes to the (6S)-5,6,7,8-tetrahydrofolate binding site.

The protein belongs to the SHMT family. In terms of assembly, homodimer. Requires pyridoxal 5'-phosphate as cofactor.

It localises to the cytoplasm. The enzyme catalyses (6R)-5,10-methylene-5,6,7,8-tetrahydrofolate + glycine + H2O = (6S)-5,6,7,8-tetrahydrofolate + L-serine. It functions in the pathway one-carbon metabolism; tetrahydrofolate interconversion. It participates in amino-acid biosynthesis; glycine biosynthesis; glycine from L-serine: step 1/1. In terms of biological role, catalyzes the reversible interconversion of serine and glycine with tetrahydrofolate (THF) serving as the one-carbon carrier. This reaction serves as the major source of one-carbon groups required for the biosynthesis of purines, thymidylate, methionine, and other important biomolecules. Also exhibits THF-independent aldolase activity toward beta-hydroxyamino acids, producing glycine and aldehydes, via a retro-aldol mechanism. The polypeptide is Serine hydroxymethyltransferase (Novosphingobium aromaticivorans (strain ATCC 700278 / DSM 12444 / CCUG 56034 / CIP 105152 / NBRC 16084 / F199)).